The primary structure comprises 1386 residues: Lysophospholipase NTE1 (1386 aa).

Over 1-19 the chain is Cytoplasmic; it reads MGPEFEDSIPLVHSDNRTT. The helical transmembrane segment at 20–40 threads the bilayer; that stretch reads TIYSVYIIISDIFSFVQWLLF. At 41–65 the chain is on the lumenal side; sequence KVLNLIIIDSPAFVLRLLSKNFEIN. A helical membrane pass occupies residues 66 to 86; the sequence is LHLSSILATLIGVSVVTYLVI. Residues 87 to 1386 lie on the Cytoplasmic side of the membrane; it reads RYKFLTGYSH…KKILYRRNSI (1300 aa). The disordered stretch occupies residues 394–416; it reads EAEAENLPKKLKHHHRNQLQRTT. The segment covering 402-411 has biased composition (basic residues); it reads KKLKHHHRNQ. A nucleoside 3',5'-cyclic phosphate is bound by residues 577–701 and 697–821; these read KRLL…LKNL and KLKN…VASK. The region spanning 1081-1245 is the PNPLA domain; it reads LVLGGGGSRG…LDNLPVNEMK (165 aa). The GXGXXG motif lies at 1085–1090; that stretch reads GGGSRG. A GXSXG motif is present at residues 1112–1116; sequence GTSIG. The Nucleophile role is filled by serine 1114. Aspartate 1232 (proton acceptor) is an active-site residue. Residues 1232 to 1234 carry the DGA/G motif; it reads DGG.

The protein belongs to the NTE family.

Its subcellular location is the endoplasmic reticulum membrane. It carries out the reaction a 1-acyl-sn-glycero-3-phosphocholine + H2O = sn-glycerol 3-phosphocholine + a fatty acid + H(+). Inhibited by organophosphorus esters. Its function is as follows. Intracellular phospholipase B that catalyzes the double deacylation of phosphatidylcholine (PC) to glycerophosphocholine (GroPCho). Plays an important role in membrane lipid homeostasis. Responsible for the rapid PC turnover in response to inositol, elevated temperatures, or when choline is present in the growth medium. The protein is Lysophospholipase NTE1 (NTE1) of Candida albicans (strain SC5314 / ATCC MYA-2876) (Yeast).